The following is a 393-amino-acid chain: Branched-chain amino acid aminotransferase 1, mitochondrial (393 aa).

The N-terminal 34 residues, 1 to 34 (MIHRGLWLHNLVQSYRVGSSSSSSTLFKLVYRYN), are a transit peptide targeting the mitochondrion. Residue R138 participates in pyridoxal 5'-phosphate binding. The Proton acceptor role is filled by K240. K240 carries the N6-(pyridoxal phosphate)lysine modification. Residue E276 participates in pyridoxal 5'-phosphate binding.

This sequence belongs to the class-IV pyridoxal-phosphate-dependent aminotransferase family. Requires pyridoxal 5'-phosphate as cofactor. In terms of tissue distribution, expressed specifically in lupulin glands.

The protein resides in the mitochondrion. It carries out the reaction L-isoleucine + 2-oxoglutarate = (S)-3-methyl-2-oxopentanoate + L-glutamate. It catalyses the reaction L-leucine + 2-oxoglutarate = 4-methyl-2-oxopentanoate + L-glutamate. The catalysed reaction is L-valine + 2-oxoglutarate = 3-methyl-2-oxobutanoate + L-glutamate. Its pathway is amino-acid biosynthesis; L-isoleucine biosynthesis; L-isoleucine from 2-oxobutanoate: step 4/4. It functions in the pathway amino-acid biosynthesis; L-leucine biosynthesis; L-leucine from 3-methyl-2-oxobutanoate: step 4/4. The protein operates within amino-acid biosynthesis; L-valine biosynthesis; L-valine from pyruvate: step 4/4. In terms of biological role, converts 2-oxo acids to branched-chain amino acids (BCAA). Shows no kinetic preferences corresponding to anabolic or catabolic functions, but likely involved in BCAA catabolism. This is Branched-chain amino acid aminotransferase 1, mitochondrial from Humulus lupulus (European hop).